Here is a 226-residue protein sequence, read N- to C-terminus: Potassium/proton antiporter CemA (226 aa).

The next 3 membrane-spanning stretches (helical) occupy residues 7–27 (FTSL…SLSF), 111–131 (IICF…LFIL), and 186–206 (IISG…KYWI).

The protein belongs to the CemA family.

The protein localises to the plastid. The protein resides in the chloroplast inner membrane. It carries out the reaction K(+)(in) + H(+)(out) = K(+)(out) + H(+)(in). In terms of biological role, contributes to K(+)/H(+) antiport activity by supporting proton efflux to control proton extrusion and homeostasis in chloroplasts in a light-dependent manner to modulate photosynthesis. Prevents excessive induction of non-photochemical quenching (NPQ) under continuous-light conditions. Indirectly promotes efficient inorganic carbon uptake into chloroplasts. This is Potassium/proton antiporter CemA from Buxus microphylla (Littleleaf boxwood).